A 97-amino-acid polypeptide reads, in one-letter code: MTLFSSISSISSSISSSKSSIASFGNGTSMGSNSIACGGGCGSGNGFGGIFIGANIDLTGGASTSSGGRGGRPGRGHGGPHGHGRGGSGSGSSCGCN.

Disordered regions lie at residues 1–22 (MTLF…SSIA) and 62–97 (ASTS…CGCN). Over residues 72–84 (RPGRGHGGPHGHG) the composition is skewed to basic residues. A compositionally biased stretch (gly residues) spans 85–97 (RGGSGSGSSCGCN).

The protein belongs to the hssA/B family.

This chain is HssA/B-like protein 44 (hssl44), found in Dictyostelium discoideum (Social amoeba).